The primary structure comprises 263 residues: 4-hydroxy-2-oxo-heptane-1,7-dioate aldolase (263 aa).

The active-site Proton acceptor is the His-45. Gln-147 contacts substrate. Residue Glu-149 participates in a divalent metal cation binding. 2 residues coordinate substrate: Ala-174 and Asp-175. A divalent metal cation is bound at residue Asp-175.

Belongs to the HpcH/HpaI aldolase family. As to quaternary structure, homohexamer; trimer of dimers. The cofactor is a divalent metal cation.

The catalysed reaction is 4-hydroxy-2-oxoheptanedioate = succinate semialdehyde + pyruvate. The protein operates within aromatic compound metabolism; 4-hydroxyphenylacetate degradation; pyruvate and succinate semialdehyde from 4-hydroxyphenylacetate: step 7/7. Functionally, catalyzes the reversible retro-aldol cleavage of 4-hydroxy-2-ketoheptane-1,7-dioate (HKHD) to pyruvate and succinic semialdehyde. The polypeptide is 4-hydroxy-2-oxo-heptane-1,7-dioate aldolase (Salmonella arizonae (strain ATCC BAA-731 / CDC346-86 / RSK2980)).